Here is a 468-residue protein sequence, read N- to C-terminus: Alpha-2A adrenergic receptor (468 aa).

Residues 1–48 (MFRQEQPLAEGSFAPMGSLQPDAGNASWNGTEAPGGGARATPYSLQVT) are Extracellular-facing. Residues asparagine 25 and asparagine 29 are each glycosylated (N-linked (GlcNAc...) asparagine). A helical transmembrane segment spans residues 49 to 74 (LTLVCLAGLLMLFTVFGNVLVIIAVF). At 75-85 (TSRALKAPQNL) the chain is on the cytoplasmic side. Residues 86–111 (FLVSLASADILVATLVIPFSLANEVM) form a helical membrane-spanning segment. Over 112–121 (GYWYFGKAWC) the chain is Extracellular. An intrachain disulfide couples cysteine 121 to cysteine 203. The chain crosses the membrane as a helical span at residues 122-144 (EIYLALDVLFCTSSIVHLCAISL). At 145 to 164 (DRYWSITQAIEYNLKRTPRR) the chain is on the cytoplasmic side. Residues 165-188 (IKAIIVTVWVISAVISFPPLISFE) form a helical membrane-spanning segment. Over 189 to 207 (KKRGRSGQPSAEPRCEIND) the chain is Extracellular. The chain crosses the membrane as a helical span at residues 208 to 232 (QKWYVISSSIGSFFAPCLIMILVYV). Over 233-392 (RIYQIAKRRT…RQNREKRFTF (160 aa)) the chain is Cytoplasmic. 2 disordered regions span residues 242–279 (TRVP…VGPV) and 291–381 (NGAP…SRWR). Residues 315 to 332 (SSEHAERPPGSRRSERGP) are compositionally biased toward basic and acidic residues. Serine 348 carries the post-translational modification Phosphoserine. Positions 351 to 366 (RRGPGATGLGAPTAGP) are enriched in low complexity. Arginine 370 carries the omega-N-methylarginine modification. Residues 393-417 (VLAVVIGVFVVCWFPFFFTYTLTAI) form a helical membrane-spanning segment. The Extracellular portion of the chain corresponds to 418 to 427 (GCPVPPTLFK). The helical transmembrane segment at 428–448 (FFFWFGYCNSSLNPVIYTIFN) threads the bilayer. Over 449 to 468 (HDFRRAFKKILCRGDRKRIV) the chain is Cytoplasmic. A lipid anchor (S-palmitoyl cysteine) is attached at cysteine 460.

Belongs to the G-protein coupled receptor 1 family. Adrenergic receptor subfamily. ADRA2A sub-subfamily. As to quaternary structure, component of the ADA2A-containing complex (ATAC), composed of KAT14, KAT2A, TADA2L, TADA3L, ZZ3, MBIP, WDR5, YEATS2, CCDC101 and DR1. As to expression, retina, brain and olfactory lobe.

Its subcellular location is the cell membrane. Its function is as follows. Alpha-2 adrenergic receptors mediate the catecholamine-induced inhibition of adenylate cyclase through the action of G proteins. Component of the ATAC complex, a complex with histone acetyltransferase activity on histones H3 and H4. The protein is Alpha-2A adrenergic receptor of Bos taurus (Bovine).